The primary structure comprises 267 residues: Phosphate import ATP-binding protein PstB (267 aa).

Residues Val12 to Asn251 form the ABC transporter domain. Residue Gly44 to Ser51 participates in ATP binding.

The protein belongs to the ABC transporter superfamily. Phosphate importer (TC 3.A.1.7) family. The complex is composed of two ATP-binding proteins (PstB), two transmembrane proteins (PstC and PstA) and a solute-binding protein (PstS).

It is found in the cell inner membrane. The enzyme catalyses phosphate(out) + ATP + H2O = ADP + 2 phosphate(in) + H(+). In terms of biological role, part of the ABC transporter complex PstSACB involved in phosphate import. Responsible for energy coupling to the transport system. In Prochlorococcus marinus (strain NATL2A), this protein is Phosphate import ATP-binding protein PstB.